The primary structure comprises 501 residues: Glycerol kinase (501 aa).

ADP is bound at residue threonine 12. ATP contacts are provided by threonine 12, threonine 13, and serine 14. Threonine 12 serves as a coordination point for sn-glycerol 3-phosphate. ADP is bound at residue arginine 16. Positions 82, 83, 134, and 244 each coordinate sn-glycerol 3-phosphate. Glycerol-binding residues include arginine 82, glutamate 83, tyrosine 134, aspartate 244, and glutamine 245. Positions 266 and 310 each coordinate ADP. ATP is bound by residues threonine 266, glycine 310, glutamine 314, and glycine 411. Glycine 411 and asparagine 415 together coordinate ADP.

The protein belongs to the FGGY kinase family.

The enzyme catalyses glycerol + ATP = sn-glycerol 3-phosphate + ADP + H(+). It participates in polyol metabolism; glycerol degradation via glycerol kinase pathway; sn-glycerol 3-phosphate from glycerol: step 1/1. With respect to regulation, inhibited by fructose 1,6-bisphosphate (FBP). In terms of biological role, key enzyme in the regulation of glycerol uptake and metabolism. Catalyzes the phosphorylation of glycerol to yield sn-glycerol 3-phosphate. This Methylorubrum extorquens (strain PA1) (Methylobacterium extorquens) protein is Glycerol kinase.